A 407-amino-acid polypeptide reads, in one-letter code: P2X receptor D (407 aa).

The Cytoplasmic segment spans residues 1-22; the sequence is MDWDNIFSYNTAKIVTIKDRRL. Residues 23 to 43 traverse the membrane as a helical segment; it reads GGLHIIFMVLIIVYIVIYSTI. Over 44–300 the chain is Lumenal; it reads YKKGYLLTET…IQNGEIGSFN (257 aa). The segment at 283–296 is pore-forming motif; the sequence is RHGIRLIFIQNGEI. A helical transmembrane segment spans residues 301-321; it reads FQALLLTFVSGLGLLAISTVL. At 322–407 the chain is on the cytoplasmic side; sequence VDQLAIRFLP…QNIQNNNIIL (86 aa). A disordered region spans residues 371–394; the sequence is KNNENNNNNDDYNDDDNEIFDDNN. The segment covering 381–391 has biased composition (acidic residues); it reads DYNDDDNEIFD.

It belongs to the P2X receptor family.

It is found in the contractile vacuole membrane. In terms of biological role, P2X receptors are ligand-gated ion channels that play a role in intracellular calcium signaling. ATP does not evoke inward currents in p2xD. Not essential for osmoregulation. The sequence is that of P2X receptor D (p2xD) from Dictyostelium discoideum (Social amoeba).